A 590-amino-acid polypeptide reads, in one-letter code: Proline--tRNA ligase (590 aa).

It belongs to the class-II aminoacyl-tRNA synthetase family. ProS type 1 subfamily. In terms of assembly, homodimer.

It is found in the cytoplasm. The enzyme catalyses tRNA(Pro) + L-proline + ATP = L-prolyl-tRNA(Pro) + AMP + diphosphate. In terms of biological role, catalyzes the attachment of proline to tRNA(Pro) in a two-step reaction: proline is first activated by ATP to form Pro-AMP and then transferred to the acceptor end of tRNA(Pro). As ProRS can inadvertently accommodate and process non-cognate amino acids such as alanine and cysteine, to avoid such errors it has two additional distinct editing activities against alanine. One activity is designated as 'pretransfer' editing and involves the tRNA(Pro)-independent hydrolysis of activated Ala-AMP. The other activity is designated 'posttransfer' editing and involves deacylation of mischarged Ala-tRNA(Pro). The misacylated Cys-tRNA(Pro) is not edited by ProRS. This chain is Proline--tRNA ligase, found in Clavibacter sepedonicus (Clavibacter michiganensis subsp. sepedonicus).